Here is a 151-residue protein sequence, read N- to C-terminus: Ribosome maturation factor RimP (151 aa).

The protein belongs to the RimP family.

The protein resides in the cytoplasm. Its function is as follows. Required for maturation of 30S ribosomal subunits. The protein is Ribosome maturation factor RimP of Persephonella marina (strain DSM 14350 / EX-H1).